Reading from the N-terminus, the 255-residue chain is Thiazole synthase (255 aa).

Lysine 96 serves as the catalytic Schiff-base intermediate with DXP. 1-deoxy-D-xylulose 5-phosphate-binding positions include glycine 157, 183–184, and 205–206; these read AG and NT.

It belongs to the ThiG family. In terms of assembly, homotetramer. Forms heterodimers with either ThiH or ThiS.

It is found in the cytoplasm. The catalysed reaction is [ThiS sulfur-carrier protein]-C-terminal-Gly-aminoethanethioate + 2-iminoacetate + 1-deoxy-D-xylulose 5-phosphate = [ThiS sulfur-carrier protein]-C-terminal Gly-Gly + 2-[(2R,5Z)-2-carboxy-4-methylthiazol-5(2H)-ylidene]ethyl phosphate + 2 H2O + H(+). The protein operates within cofactor biosynthesis; thiamine diphosphate biosynthesis. Its function is as follows. Catalyzes the rearrangement of 1-deoxy-D-xylulose 5-phosphate (DXP) to produce the thiazole phosphate moiety of thiamine. Sulfur is provided by the thiocarboxylate moiety of the carrier protein ThiS. In vitro, sulfur can be provided by H(2)S. This Staphylococcus saprophyticus subsp. saprophyticus (strain ATCC 15305 / DSM 20229 / NCIMB 8711 / NCTC 7292 / S-41) protein is Thiazole synthase.